Consider the following 191-residue polypeptide: Ankyrin repeat domain-containing protein 22 (191 aa).

ANK repeat units lie at residues 39-68, 72-100, 101-130, and 134-163; these read NGDTPLICACRRGHVRIVSFLLRRNANVNL, KERTCLHYAVKKKFTFIDYLLIILLMPVL, LIGYFLMVSKTKQNEALVRMLLDAGVEVNA, and YGCTALHYACEMKNQSLIPLLLEARADPTI.

This Homo sapiens (Human) protein is Ankyrin repeat domain-containing protein 22 (ANKRD22).